A 502-amino-acid chain; its full sequence is Arginine-specific demethylase JMJ22 (502 aa).

Positions 15-45 (KSKSKRLKLHQHEPESLFPEKEVEEEDEDEG) are disordered. Basic and acidic residues predominate over residues 24-35 (HQHEPESLFPEK). One can recognise an F-box domain in the interval 80 to 126 (LGNLQILSDELVLDILGLLGANHLGVLATVTKSFYIFANHEPLWRNL). The JmjC domain occupies 279–439 (EKVPVLDSEY…NVLEFLKKPN (161 aa)). His324, Asp326, and His407 together coordinate Fe cation.

Belongs to the JARID1 histone demethylase family. It depends on Fe(2+) as a cofactor. Expressed in inflorescences, roots and siliques, and, at low levels, in leaves and stems.

The protein resides in the nucleus. It catalyses the reaction N(omega),N(omega)-dimethyl-L-arginyl-[protein] + 2-oxoglutarate + O2 = N(omega)-methyl-L-arginyl-[protein] + formaldehyde + succinate + CO2. Histone demethylase that demethylates 'Arg-3' (H4R3me) of histone H4 with a specific activity for H4R3me2. Involved in the positive regulation of gene expression. Together with JMJ20, positively regulates seed germination by promoting the removal of repressive histone arginine methylations (e.g. H4R3me2) at GA3ox1 and GA3ox2 to trigger gibberellic acid (GA) biosynthesis. In Arabidopsis thaliana (Mouse-ear cress), this protein is Arginine-specific demethylase JMJ22.